Consider the following 163-residue polypeptide: RRM-domain-containing protein ECU01_0840 (163 aa).

The region spanning 84-163 (CSVKLSNLPL…SLGLSAEIAR (80 aa)) is the RRM domain.

In Encephalitozoon cuniculi (strain GB-M1) (Microsporidian parasite), this protein is RRM-domain-containing protein ECU01_0840.